Here is a 349-residue protein sequence, read N- to C-terminus: Aspartate carbamoyltransferase catalytic subunit (349 aa).

Carbamoyl phosphate is bound by residues Arg59 and Thr60. Position 87 (Lys87) interacts with L-aspartate. Residues Arg109, His142, and Gln145 each contribute to the carbamoyl phosphate site. The L-aspartate site is built by Arg182 and Arg253. 2 residues coordinate carbamoyl phosphate: Gly294 and Pro295.

This sequence belongs to the aspartate/ornithine carbamoyltransferase superfamily. ATCase family. Heterododecamer (2C3:3R2) of six catalytic PyrB chains organized as two trimers (C3), and six regulatory PyrI chains organized as three dimers (R2).

It catalyses the reaction carbamoyl phosphate + L-aspartate = N-carbamoyl-L-aspartate + phosphate + H(+). Its pathway is pyrimidine metabolism; UMP biosynthesis via de novo pathway; (S)-dihydroorotate from bicarbonate: step 2/3. Its function is as follows. Catalyzes the condensation of carbamoyl phosphate and aspartate to form carbamoyl aspartate and inorganic phosphate, the committed step in the de novo pyrimidine nucleotide biosynthesis pathway. The protein is Aspartate carbamoyltransferase catalytic subunit of Synechococcus sp. (strain CC9605).